A 559-amino-acid chain; its full sequence is Glypican-1 (559 aa).

The first 23 residues, 1-23 (MELRARGWWLLYAAAVLVACARG), serve as a signal peptide directing secretion. Disulfide bonds link C32–C68, C62–C256, C69–C259, C191–C343, C246–C279, C268–C415, and C272–C401. Residues N79 and N116 are each glycosylated (N-linked (GlcNAc...) asparagine). The tract at residues 478 to 539 (FQDASDDGSG…SAAAPTPPQA (62 aa)) is disordered. Residues S486, S488, and S490 are each glycosylated (O-linked (Xyl...) (heparan sulfate) serine). A lipid anchor (GPI-anchor amidated serine) is attached at S530. A propeptide spans 531–559 (AAAPTPPQASPLLLLGLALALPAVAPRGR) (removed in mature form).

Belongs to the glypican family. In terms of processing, S-nitrosylated in a Cu(2+)-dependent manner. Nitric acid (NO) is released from the nitrosylated cysteines by ascorbate or by some other reducing agent, in a Cu(2+) or Zn(2+) dependent manner. This free nitric oxide is then capable of cleaving the heparan sulfate side chains. N- and O-glycosylated. N-glycosylation is mainly of the complex type containing sialic acid. O-glycosylated with heparan sulfate. The heparan sulfate chains can be cleaved either by the action of heparanase or, degraded by a deaminative process that uses nitric oxide (NO) released from the S-nitrosylated cysteines. This process is triggered by ascorbate, or by some other reducing agent, in a Cu(2+)- or Zn(2+) dependent manner. Cu(2+) ions are provided by ceruloproteins such as APP, PRNP or CP which associate with GCP1 in intracellular compartments or lipid rafts. Post-translationally, shed from the cell surface probably by further cleavage.

The protein resides in the cell membrane. It localises to the endosome. It is found in the secreted. The protein localises to the extracellular space. In terms of biological role, cell surface proteoglycan that bears heparan sulfate. Binds, via the heparan sulfate side chains, alpha-4 (V) collagen and participates in Schwann cell myelination. May act as a catalyst in increasing the rate of conversion of prion protein PRPN (C) to PRNP (Sc) via associating (via the heparan sulfate side chains) with both forms of PRPN, targeting them to lipid rafts and facilitating their interaction. Required for proper skeletal muscle differentiation by sequestering FGF2 in lipid rafts preventing its binding to receptors (FGFRs) and inhibiting the FGF-mediated signaling. In Bos taurus (Bovine), this protein is Glypican-1 (GPC1).